We begin with the raw amino-acid sequence, 330 residues long: Putative 4-hydroxythreonine-4-phosphate dehydrogenase (330 aa).

A divalent metal cation contacts are provided by His-169, His-213, and His-263.

Belongs to the PdxA family. As to quaternary structure, homodimer. Zn(2+) is required as a cofactor. Requires Mg(2+) as cofactor. Co(2+) serves as cofactor.

Its subcellular location is the cytoplasm. The enzyme catalyses 4-(phosphooxy)-L-threonine + NAD(+) = 3-amino-2-oxopropyl phosphate + CO2 + NADH. It functions in the pathway cofactor biosynthesis; pyridoxine 5'-phosphate biosynthesis; pyridoxine 5'-phosphate from D-erythrose 4-phosphate: step 4/5. In terms of biological role, catalyzes the NAD(P)-dependent oxidation of 4-(phosphooxy)-L-threonine (HTP) into 2-amino-3-oxo-4-(phosphooxy)butyric acid which spontaneously decarboxylates to form 3-amino-2-oxopropyl phosphate (AHAP). This Novosphingobium aromaticivorans (Sphingomonas aromaticivorans) protein is Putative 4-hydroxythreonine-4-phosphate dehydrogenase.